Reading from the N-terminus, the 312-residue chain is tRNA uridine(34) hydroxylase (312 aa).

The 95-residue stretch at 124-218 (SDPEVLLIDT…YLEEVPQEQT (95 aa)) folds into the Rhodanese domain. The Cysteine persulfide intermediate role is filled by C178. 2 stretches are compositionally biased toward basic and acidic residues: residues 279–294 (TRES…ELAR) and 302–312 (IGRDPRQLNEA). The disordered stretch occupies residues 279-312 (TRESARERQKQIELARARNQPHPIGRDPRQLNEA).

The protein belongs to the TrhO family.

It catalyses the reaction uridine(34) in tRNA + AH2 + O2 = 5-hydroxyuridine(34) in tRNA + A + H2O. Functionally, catalyzes oxygen-dependent 5-hydroxyuridine (ho5U) modification at position 34 in tRNAs. In Ectopseudomonas mendocina (strain ymp) (Pseudomonas mendocina), this protein is tRNA uridine(34) hydroxylase.